A 444-amino-acid chain; its full sequence is Exodeoxyribonuclease 7 large subunit (444 aa).

It belongs to the XseA family. As to quaternary structure, heterooligomer composed of large and small subunits.

The protein localises to the cytoplasm. The enzyme catalyses Exonucleolytic cleavage in either 5'- to 3'- or 3'- to 5'-direction to yield nucleoside 5'-phosphates.. Its function is as follows. Bidirectionally degrades single-stranded DNA into large acid-insoluble oligonucleotides, which are then degraded further into small acid-soluble oligonucleotides. In Xylella fastidiosa (strain 9a5c), this protein is Exodeoxyribonuclease 7 large subunit.